We begin with the raw amino-acid sequence, 303 residues long: 1-phosphofructokinase (303 aa).

248–249 (GD) contributes to the ATP binding site. Residue Asp-249 is the Proton acceptor of the active site.

The protein belongs to the carbohydrate kinase PfkB family.

It carries out the reaction beta-D-fructose 1-phosphate + ATP = beta-D-fructose 1,6-bisphosphate + ADP + H(+). Catalyzes the ATP-dependent phosphorylation of fructose-l-phosphate to fructose-l,6-bisphosphate. This is 1-phosphofructokinase (fruK) from Bacillus subtilis (strain 168).